The sequence spans 1247 residues: SAM and SH3 domain-containing protein 1 (1247 aa).

The segment at 1-39 (MEDAGAAGPGPEPEPEPEPEPEPAPEPEPEPKPGAGTSE) is disordered. Acidic residues predominate over residues 13–28 (PEPEPEPEPEPAPEPE). Serine 90 carries the post-translational modification Phosphoserine. Disordered stretches follow at residues 126–145 (VERK…VGKG), 221–257 (AALD…ESVK), and 316–344 (FFDG…LDTW). Phosphoserine is present on serine 248. A compositionally biased stretch (low complexity) spans 331–343 (SLTTSPSSSSLDT). Residue serine 407 is modified to Phosphoserine. Residues 449–573 (SLGKKVKSVK…DFTPSPYDTD (125 aa)) are disordered. Low complexity-rich tracts occupy residues 468–484 (KYSS…DGMP) and 505–523 (GGSV…SMSG). Positions 524 to 536 (QTVSTTDSSTSNR) are enriched in polar residues. Positions 554 to 615 (PFCGRARVHT…KFIYVDVLSE (62 aa)) constitute an SH3 domain. Serine 614 carries the post-translational modification Phosphoserine. 2 disordered regions span residues 616–639 (DEEK…KSVE) and 713–810 (DSQG…LNKN). A compositionally biased stretch (basic residues) spans 622–631 (RPTRRRRKGR). One can recognise an SAM 1 domain in the interval 633 to 697 (PQPKSVEDLL…LTAVELLQEY (65 aa)). Residues 746 to 765 (SAKSSTEPSLKSFSRNQLGN) are compositionally biased toward polar residues. 2 positions are modified to phosphoserine: serine 821 and serine 839. 3 disordered regions span residues 846 to 884 (EPGA…PLEQ), 903 to 946 (PQKL…LART), and 971 to 1065 (DAEQ…SELP). The segment at 852–860 (DVPTEVTEP) is required for interaction with TRAF6. A Phosphothreonine modification is found at threonine 858. Residues 1050–1060 (GSPPSTRPPPW) show a composition bias toward pro residues. The SAM 2 domain maps to 1177–1241 (GCISSVSDWL…LSAARLFKLP (65 aa)).

As to quaternary structure, interacts with GNAS. Interacts with IQGAP1. Interacts with TRAF6 (via C-terminus); the interaction is LPS-dependent. Interacts with MAP3K7, CHUK and IKBKB. In terms of tissue distribution, expressed ubiquitously, with highest levels in lung, placenta, spleen and thymus. Down-regulated in the majority (74%) of breast tumors in comparison with corresponding normal breast epithelial tissues. Expressed in the epidermis, epidermal keratinocytes, dermal fibroblasts and melanocytes.

The protein resides in the cytoplasm. Functionally, is a positive regulator of NF-kappa-B signaling downstream of TLR4 activation. It acts as a scaffold molecule to assemble a molecular complex that includes TRAF6, MAP3K7, CHUK and IKBKB, thereby facilitating NF-kappa-B signaling activation. Regulates TRAF6 and MAP3K7 ubiquitination. Involved in the regulation of cell mobility. Regulates lipolysaccharide (LPS)-induced endothelial cell migration. Is involved in the regulation of skin pigmentation through the control of melanocyte migration in the epidermis. The chain is SAM and SH3 domain-containing protein 1 (SASH1) from Homo sapiens (Human).